The sequence spans 248 residues: Uridylate kinase (248 aa).

ATP is bound at residue 11-14; it reads KISG. A UMP-binding site is contributed by Gly-53. Residues Gly-54 and Arg-58 each coordinate ATP. Residues Asp-74 and 135 to 142 contribute to the UMP site; that span reads AGSPYLTT. ATP is bound by residues Thr-162, Tyr-169, and Asp-172.

Belongs to the UMP kinase family. In terms of assembly, homohexamer.

The protein resides in the cytoplasm. It catalyses the reaction UMP + ATP = UDP + ADP. Its pathway is pyrimidine metabolism; CTP biosynthesis via de novo pathway; UDP from UMP (UMPK route): step 1/1. Its activity is regulated as follows. Inhibited by UTP. Catalyzes the reversible phosphorylation of UMP to UDP. In Chlamydia pneumoniae (Chlamydophila pneumoniae), this protein is Uridylate kinase.